Reading from the N-terminus, the 348-residue chain is Protein RecA (348 aa).

Residue 67-74 (GPESSGKT) coordinates ATP.

This sequence belongs to the RecA family.

The protein resides in the cytoplasm. Its function is as follows. Can catalyze the hydrolysis of ATP in the presence of single-stranded DNA, the ATP-dependent uptake of single-stranded DNA by duplex DNA, and the ATP-dependent hybridization of homologous single-stranded DNAs. It interacts with LexA causing its activation and leading to its autocatalytic cleavage. This Amycolatopsis mediterranei (strain U-32) protein is Protein RecA.